A 291-amino-acid polypeptide reads, in one-letter code: Bifunctional protein FolD (291 aa).

Residues 166–168 and I232 each bind NADP(+); that span reads GAS.

The protein belongs to the tetrahydrofolate dehydrogenase/cyclohydrolase family. As to quaternary structure, homodimer.

It catalyses the reaction (6R)-5,10-methylene-5,6,7,8-tetrahydrofolate + NADP(+) = (6R)-5,10-methenyltetrahydrofolate + NADPH. The catalysed reaction is (6R)-5,10-methenyltetrahydrofolate + H2O = (6R)-10-formyltetrahydrofolate + H(+). The protein operates within one-carbon metabolism; tetrahydrofolate interconversion. Functionally, catalyzes the oxidation of 5,10-methylenetetrahydrofolate to 5,10-methenyltetrahydrofolate and then the hydrolysis of 5,10-methenyltetrahydrofolate to 10-formyltetrahydrofolate. The protein is Bifunctional protein FolD of Photorhabdus laumondii subsp. laumondii (strain DSM 15139 / CIP 105565 / TT01) (Photorhabdus luminescens subsp. laumondii).